Here is a 114-residue protein sequence, read N- to C-terminus: Large ribosomal subunit protein uL22 (114 aa).

This sequence belongs to the universal ribosomal protein uL22 family. In terms of assembly, part of the 50S ribosomal subunit.

In terms of biological role, this protein binds specifically to 23S rRNA; its binding is stimulated by other ribosomal proteins, e.g. L4, L17, and L20. It is important during the early stages of 50S assembly. It makes multiple contacts with different domains of the 23S rRNA in the assembled 50S subunit and ribosome. Its function is as follows. The globular domain of the protein is located near the polypeptide exit tunnel on the outside of the subunit, while an extended beta-hairpin is found that lines the wall of the exit tunnel in the center of the 70S ribosome. The sequence is that of Large ribosomal subunit protein uL22 from Ehrlichia canis (strain Jake).